Reading from the N-terminus, the 509-residue chain is Putative ATP-dependent RNA helicase QP509L (509 aa).

A Helicase ATP-binding domain is found at 110–262 (KKLLSPYGRF…KIIIHHLGQP (153 aa)). 123–130 (LNTGLGKT) is a binding site for ATP. The DEAH box motif lies at 215–218 (DEAH).

This sequence belongs to the DEAD box helicase family. DEAH subfamily.

It catalyses the reaction ATP + H2O = ADP + phosphate + H(+). In African swine fever virus (strain Badajoz 1971 Vero-adapted) (Ba71V), this protein is Putative ATP-dependent RNA helicase QP509L.